The following is a 663-amino-acid chain: Probable methylenetetrahydrofolate reductase (NADPH) (663 aa).

E76 serves as the catalytic Proton donor/acceptor. Residues 76 to 81 (EFFPPR) and 107 to 108 (TW) each bind NAD(+). A Phosphothreonine modification is found at T107. Residues 107 to 108 (TW), H141, 171 to 173 (RGD), 187 to 188 (RA), Y210, 214 to 217 (HPQA), D223, and K230 contribute to the FAD site. D173 lines the substrate pocket. Substrate is bound by residues Q241, Y334, and R338. The residue at position 408 (S408) is a Phosphoserine. T465 bears the Phosphothreonine mark. S-adenosyl-L-methionine contacts are provided by residues 477–480 (QPET), 497–501 (TVNSQ), T578, and T591.

This sequence belongs to the methylenetetrahydrofolate reductase family. Requires FAD as cofactor.

It catalyses the reaction (6S)-5-methyl-5,6,7,8-tetrahydrofolate + NADP(+) = (6R)-5,10-methylene-5,6,7,8-tetrahydrofolate + NADPH + H(+). It functions in the pathway one-carbon metabolism; tetrahydrofolate interconversion. This Caenorhabditis elegans protein is Probable methylenetetrahydrofolate reductase (NADPH).